A 318-amino-acid chain; its full sequence is Ribose-phosphate pyrophosphokinase 2 (318 aa).

96–101 (RQDKKD) contacts ATP. Residues aspartate 128, histidine 130, aspartate 139, and aspartate 143 each coordinate Mg(2+). Histidine 130 is a binding site for ATP. The binding of phosphoribosylpyrophosphate stretch occupies residues 212–227 (KDRVAILVDDMADTCG).

Belongs to the ribose-phosphate pyrophosphokinase family. Homodimer. The active form is probably a hexamer composed of 3 homodimers. It depends on Mg(2+) as a cofactor.

It carries out the reaction D-ribose 5-phosphate + ATP = 5-phospho-alpha-D-ribose 1-diphosphate + AMP + H(+). It functions in the pathway metabolic intermediate biosynthesis; 5-phospho-alpha-D-ribose 1-diphosphate biosynthesis; 5-phospho-alpha-D-ribose 1-diphosphate from D-ribose 5-phosphate (route I): step 1/1. Its activity is regulated as follows. Activated by magnesium and inorganic phosphate. Competitively or non-competitively inhibited by ADP, 2,3-bisphosphoglyceride or GDP. Functionally, catalyzes the synthesis of phosphoribosylpyrophosphate (PRPP) that is essential for nucleotide synthesis. This chain is Ribose-phosphate pyrophosphokinase 2 (prps2), found in Xenopus laevis (African clawed frog).